We begin with the raw amino-acid sequence, 488 residues long: Pup--protein ligase (488 aa).

E33 contributes to the Mg(2+) binding site. Position 76 (R76) interacts with ATP. A Mg(2+)-binding site is contributed by Y78. The active-site Proton acceptor is D80. A Mg(2+)-binding site is contributed by E86. The ATP site is built by T89 and W453.

It belongs to the Pup ligase/Pup deamidase family. Pup-conjugating enzyme subfamily.

The catalysed reaction is ATP + [prokaryotic ubiquitin-like protein]-L-glutamate + [protein]-L-lysine = ADP + phosphate + N(6)-([prokaryotic ubiquitin-like protein]-gamma-L-glutamyl)-[protein]-L-lysine.. Its pathway is protein degradation; proteasomal Pup-dependent pathway. It functions in the pathway protein modification; protein pupylation. In terms of biological role, catalyzes the covalent attachment of the prokaryotic ubiquitin-like protein modifier Pup to the proteasomal substrate proteins, thereby targeting them for proteasomal degradation. This tagging system is termed pupylation. The ligation reaction involves the side-chain carboxylate of the C-terminal glutamate of Pup and the side-chain amino group of a substrate lysine. The sequence is that of Pup--protein ligase from Bifidobacterium adolescentis (strain ATCC 15703 / DSM 20083 / NCTC 11814 / E194a).